Here is a 128-residue protein sequence, read N- to C-terminus: Transcription antitermination protein NusB (128 aa).

It belongs to the NusB family.

In terms of biological role, involved in transcription antitermination. Required for transcription of ribosomal RNA (rRNA) genes. Binds specifically to the boxA antiterminator sequence of the ribosomal RNA (rrn) operons. The chain is Transcription antitermination protein NusB from Listeria monocytogenes serotype 4a (strain HCC23).